A 276-amino-acid chain; its full sequence is MAIKTYKPYTPSRRYITGLSSEDITAKPSVRSLLVKLPAHAGRNSYGRITSRHKEAGAKKLYRIIDFKRRKFGIEGKVEAIEYDPYRNCRIALIAYKDGEKRYILQPRGLSVGDIVAAAESGLDIKPGNAMKLKNIPVGTIVHNVELKPGKGGQMIRSAGAYAQLMGKEEKYVILRLASGEMRQVLAECMASIGEVGNEEWANITIGKAGRNRHRGIRPQTRGSAMNPVDHPHGGGEGKKNSGRHPVTPWGKPTKGAKTRCKKASDKLIISRRKGK.

The tract at residues 211–276 is disordered; that stretch reads RNRHRGIRPQ…KLIISRRKGK (66 aa). Over residues 230-240 the composition is skewed to basic and acidic residues; sequence DHPHGGGEGKK.

This sequence belongs to the universal ribosomal protein uL2 family. Part of the 50S ribosomal subunit. Forms a bridge to the 30S subunit in the 70S ribosome.

One of the primary rRNA binding proteins. Required for association of the 30S and 50S subunits to form the 70S ribosome, for tRNA binding and peptide bond formation. It has been suggested to have peptidyltransferase activity; this is somewhat controversial. Makes several contacts with the 16S rRNA in the 70S ribosome. This Campylobacter jejuni subsp. doylei (strain ATCC BAA-1458 / RM4099 / 269.97) protein is Large ribosomal subunit protein uL2.